A 172-amino-acid chain; its full sequence is RNA silencing suppressor p19 (172 aa).

The segment at 153 to 172 (EGNVSGGSPEGIEAFEKESE) is disordered.

The protein belongs to the tombusvirus protein p19 family. In terms of assembly, homodimer.

Its function is as follows. Viral suppressor of RNA silencing which binds specifically to silencing RNAs (siRNAs). Acts as a molecular caliper to specifically select siRNAs based on the length of the duplex region of the RNA. This Pelargonium zonale (PeNSV) protein is RNA silencing suppressor p19.